A 696-amino-acid polypeptide reads, in one-letter code: Serine/threonine-protein kinase sck1 (696 aa).

Disordered stretches follow at residues 1–59 and 77–118; these read MTEI…YDPV and HKEQ…TPPS. Polar residues predominate over residues 11–37; it reads SSNSENTNQASPSTIQSHSTQPVLSND. 2 stretches are compositionally biased toward basic and acidic residues: residues 38-49 and 77-88; these read HSTKVNDYEGKE and HKEQSLKEDKES. In terms of domain architecture, C2 spans 122–272; that stretch reads IRHDTVVPKD…VQEAWYKLEP (151 aa). The region spanning 302–563 is the Protein kinase domain; sequence FTALRLIGKG…TTELKEHPFF (262 aa). Residues 308-316 and Lys-331 each bind ATP; that span reads IGKGTFGQV. The active-site Proton acceptor is the Asp-428. An AGC-kinase C-terminal domain is found at 564-643; that stretch reads ADINWDLLSK…VNKSIDEQFQ (80 aa). A Phosphothreonine modification is found at Thr-632. Ser-665 bears the Phosphoserine mark.

Belongs to the protein kinase superfamily. AGC Ser/Thr protein kinase family. cAMP subfamily.

The enzyme catalyses L-seryl-[protein] + ATP = O-phospho-L-seryl-[protein] + ADP + H(+). The catalysed reaction is L-threonyl-[protein] + ATP = O-phospho-L-threonyl-[protein] + ADP + H(+). Functionally, protein kinase that is part of growth control pathway which is at least partially redundant with the cAMP pathway. Required for trehalase activation. The chain is Serine/threonine-protein kinase sck1 (sck1) from Schizosaccharomyces pombe (strain 972 / ATCC 24843) (Fission yeast).